The following is a 289-amino-acid chain: Acetyl-coenzyme A carboxylase carboxyl transferase subunit beta (289 aa).

The CoA carboxyltransferase N-terminal domain maps to H23 to L289. 4 residues coordinate Zn(2+): C27, C30, C46, and C49. The C4-type zinc-finger motif lies at C27 to C49.

This sequence belongs to the AccD/PCCB family. In terms of assembly, acetyl-CoA carboxylase is a heterohexamer composed of biotin carboxyl carrier protein (AccB), biotin carboxylase (AccC) and two subunits each of ACCase subunit alpha (AccA) and ACCase subunit beta (AccD). Zn(2+) serves as cofactor.

The protein resides in the cytoplasm. It catalyses the reaction N(6)-carboxybiotinyl-L-lysyl-[protein] + acetyl-CoA = N(6)-biotinyl-L-lysyl-[protein] + malonyl-CoA. It participates in lipid metabolism; malonyl-CoA biosynthesis; malonyl-CoA from acetyl-CoA: step 1/1. Component of the acetyl coenzyme A carboxylase (ACC) complex. Biotin carboxylase (BC) catalyzes the carboxylation of biotin on its carrier protein (BCCP) and then the CO(2) group is transferred by the transcarboxylase to acetyl-CoA to form malonyl-CoA. This is Acetyl-coenzyme A carboxylase carboxyl transferase subunit beta from Wolinella succinogenes (strain ATCC 29543 / DSM 1740 / CCUG 13145 / JCM 31913 / LMG 7466 / NCTC 11488 / FDC 602W) (Vibrio succinogenes).